A 137-amino-acid chain; its full sequence is Major seminal plasma glycoprotein PSP-II (137 aa).

The N-terminal stretch at 1-21 is a signal peptide; it reads MKLGTAIPWALLLSTATLVST. 2 disulfide bridges follow: cysteine 30-cysteine 51 and cysteine 74-cysteine 95. Residues 30–131 enclose the CUB domain; sequence CGRVIKDTSG…SPFLIYFYGS (102 aa). N-linked (GlcNAc...) (complex) asparagine glycosylation is present at asparagine 119.

Monomer or heterodimer with PSP-I (depending on the type of glycosylation of PSP-I). As to expression, seminal plasma or sperm.

It is found in the secreted. This is Major seminal plasma glycoprotein PSP-II from Sus scrofa (Pig).